We begin with the raw amino-acid sequence, 548 residues long: uncharacterized protein (548 aa).

Short-chain dehydrogenase/reductase regions lie at residues 1-250 (MDDR…WMSV) and 271-548 (PVED…LLSP). 12–37 (IVVTGAAGGIGRALVDIFAANGDVVV) lines the NADP(+) pocket. Ser-141 contributes to the substrate binding site. The active-site Proton acceptor is Tyr-154. 280 to 304 (VIVMGGATGVGAAIARRFAENGDTV) lines the NADP(+) pocket. Tyr-420 acts as the Proton acceptor in catalysis.

It belongs to the short-chain dehydrogenases/reductases (SDR) family.

This is an uncharacterized protein from Sinorhizobium fredii (strain NBRC 101917 / NGR234).